A 344-amino-acid chain; its full sequence is Inositol 2-dehydrogenase/D-chiro-inositol 3-dehydrogenase (344 aa).

This sequence belongs to the Gfo/Idh/MocA family. In terms of assembly, homotetramer.

The enzyme catalyses myo-inositol + NAD(+) = scyllo-inosose + NADH + H(+). It carries out the reaction 1D-chiro-inositol + NAD(+) = scyllo-inosine + NADH + H(+). The protein operates within polyol metabolism; myo-inositol degradation into acetyl-CoA; acetyl-CoA from myo-inositol: step 1/7. Functionally, involved in the oxidation of myo-inositol (MI) and D-chiro-inositol (DCI) to 2-keto-myo-inositol (2KMI or 2-inosose) and 1-keto-D-chiro-inositol (1KDCI), respectively. In Bacillus licheniformis (strain ATCC 14580 / DSM 13 / JCM 2505 / CCUG 7422 / NBRC 12200 / NCIMB 9375 / NCTC 10341 / NRRL NRS-1264 / Gibson 46), this protein is Inositol 2-dehydrogenase/D-chiro-inositol 3-dehydrogenase.